Consider the following 156-residue polypeptide: ATP synthase subunit b (156 aa).

Residues Leu7 to Pro27 traverse the membrane as a helical segment.

This sequence belongs to the ATPase B chain family. As to quaternary structure, F-type ATPases have 2 components, F(1) - the catalytic core - and F(0) - the membrane proton channel. F(1) has five subunits: alpha(3), beta(3), gamma(1), delta(1), epsilon(1). F(0) has three main subunits: a(1), b(2) and c(10-14). The alpha and beta chains form an alternating ring which encloses part of the gamma chain. F(1) is attached to F(0) by a central stalk formed by the gamma and epsilon chains, while a peripheral stalk is formed by the delta and b chains.

The protein resides in the cell inner membrane. Functionally, f(1)F(0) ATP synthase produces ATP from ADP in the presence of a proton or sodium gradient. F-type ATPases consist of two structural domains, F(1) containing the extramembraneous catalytic core and F(0) containing the membrane proton channel, linked together by a central stalk and a peripheral stalk. During catalysis, ATP synthesis in the catalytic domain of F(1) is coupled via a rotary mechanism of the central stalk subunits to proton translocation. Component of the F(0) channel, it forms part of the peripheral stalk, linking F(1) to F(0). This is ATP synthase subunit b from Shewanella sp. (strain MR-4).